Consider the following 376-residue polypeptide: 1-acyl-sn-glycerol-3-phosphate acyltransferase gamma (376 aa).

At M1 to R124 the chain is on the cytoplasmic side. The HXXXXD motif motif lies at H96 to D101. Residues E125 to K145 form a helical membrane-spanning segment. At R146–T316 the chain is on the lumenal side. The chain crosses the membrane as a helical span at residues I317–L339. The Cytoplasmic portion of the chain corresponds to T340 to E376.

The protein belongs to the 1-acyl-sn-glycerol-3-phosphate acyltransferase family. Widely expressed. Mainly expressed in testis, kidney and liver (at protein level).

The protein resides in the endoplasmic reticulum membrane. Its subcellular location is the nucleus envelope. The catalysed reaction is a 1-acyl-sn-glycero-3-phosphate + an acyl-CoA = a 1,2-diacyl-sn-glycero-3-phosphate + CoA. It carries out the reaction pentadecanoyl-CoA + 1-(9Z-octadecenoyl)-sn-glycero-3-phosphate = 1-(9Z)-octadecenoyl-2-pentadecanoyl-sn-glycero-3-phosphate + CoA. The enzyme catalyses heptadecanoyl-CoA + 1-(9Z-octadecenoyl)-sn-glycero-3-phosphate = 1-(9Z)-octadecenoyl-2-heptadecanoyl-sn-glycero-3-phosphate + CoA. It catalyses the reaction 1-(9Z-octadecenoyl)-sn-glycero-3-phosphate + octadecanoyl-CoA = 1-(9Z-octadecenoyl)-2-octadecanoyl-sn-glycero-3-phosphate + CoA. The catalysed reaction is nonadecanoyl-CoA + 1-(9Z-octadecenoyl)-sn-glycero-3-phosphate = 1-(9Z)-octadecenoyl-2-nonadecanoyl-sn-glycero-3-phosphate + CoA. It carries out the reaction 1-(9Z-octadecenoyl)-sn-glycero-3-phosphate + (5Z,8Z,11Z,14Z)-eicosatetraenoyl-CoA = 1-(9Z)-octadecenoyl-2-(5Z,8Z,11Z,14Z)-eicosatetraenoyl-sn-glycero-3-phosphate + CoA. The enzyme catalyses 1-(9Z-octadecenoyl)-sn-glycero-3-phosphate + (9Z)-octadecenoyl-CoA = 1,2-di-(9Z-octadecenoyl)-sn-glycero-3-phosphate + CoA. It catalyses the reaction 1-(9Z-octadecenoyl)-sn-glycero-3-phosphate + (9Z,12Z)-octadecadienoyl-CoA = 1-(9Z)-octadecenoyl-2-(9Z,12Z)-octadecadienoyl-sn-glycero-3-phosphate + CoA. The catalysed reaction is 1-(9Z-octadecenoyl)-sn-glycero-3-phosphocholine + (5Z,8Z,11Z,14Z)-eicosatetraenoyl-CoA = 1-(9Z)-octadecenoyl-2-(5Z,8Z,11Z,14Z)-icosatetraenoyl-sn-glycero-3-phosphocholine + CoA. It carries out the reaction 1-(9Z-octadecenoyl)-sn-glycero-3-phospho-(1D-myo-inositol) + (5Z,8Z,11Z,14Z)-eicosatetraenoyl-CoA = 1-(9Z-octadecenoyl)-2-(5Z,8Z,11Z,14Z-eicosatetraenoyl)-sn-glycero-3-phospho-1D-myo-inositol + CoA. The enzyme catalyses 1-(9Z-octadecenoyl)-sn-glycero-3-phospho-L-serine + (5Z,8Z,11Z,14Z)-eicosatetraenoyl-CoA = 1-(9Z-octadecenoyl)-2-(5Z,8Z,11Z,14Z-eicosatetraenoyl)-sn-glycero-3-phospho-L-serine + CoA. It catalyses the reaction 1-hexadecanoyl-sn-glycero-3-phosphate + (9Z)-octadecenoyl-CoA = 1-hexadecanoyl-2-(9Z-octadecenoyl)-sn-glycero-3-phosphate + CoA. The catalysed reaction is 1-hexadecanoyl-sn-glycero-3-phosphate + (5Z,8Z,11Z,14Z)-eicosatetraenoyl-CoA = 1-hexadecanoyl-2-(5Z,8Z,11Z,14Z-eicosatetraenoyl)-sn-glycero-3-phosphate + CoA. It carries out the reaction 1-heptadecanoyl-sn-glycero-3-phosphate + (5Z,8Z,11Z,14Z)-eicosatetraenoyl-CoA = 1-heptadecanoyl-2-(5Z,8Z,11Z,14Z)-eicosatetraenoyl-sn-glycero-3-phosphate + CoA. The enzyme catalyses 1-octadecanoyl-sn-glycero-3-phosphate + (9Z)-octadecenoyl-CoA = 1-octadecanoyl-2-(9Z-octadecenoyl)-sn-glycero-3-phosphate + CoA. It catalyses the reaction 1-octadecanoyl-sn-glycero-3-phosphate + (5Z,8Z,11Z,14Z)-eicosatetraenoyl-CoA = 1-octadecanoyl-2-(5Z,8Z,11Z,14Z-eicosatetraenoyl)-sn-glycero-3-phosphate + CoA. The catalysed reaction is 1-(9Z-octadecenoyl)-sn-glycero-3-phosphate + hexadecanoyl-CoA = 1-hexadecanoyl-2-(9Z-octadecenoyl)-sn-glycero-3-phosphate + CoA. It carries out the reaction 1-O-(9Z-octadecenyl)-sn-glycero-3-phosphate + (5Z,8Z,11Z,14Z)-eicosatetraenoyl-CoA = 1-O-(9Z-octadecenyl)-2-(5Z,8Z,11Z,14Z-eicosatetraenoyl)-sn-glycero-3-phosphate + CoA. The enzyme catalyses a 1-acyl-sn-glycero-3-phospho-(1D-myo-inositol) + (5Z,8Z,11Z,14Z)-eicosatetraenoyl-CoA = a 1-acyl-2-(5Z,8Z,11Z,14Z-eicosatetraenoyl)-sn-glycero-3-phospho-(1D-myo-inositol) + CoA. The protein operates within phospholipid metabolism; CDP-diacylglycerol biosynthesis; CDP-diacylglycerol from sn-glycerol 3-phosphate: step 2/3. With respect to regulation, in males, activity increases in an age-dependent fashion, maybe derived from the induction by sex-hormones. In terms of biological role, converts 1-acyl-sn-glycerol-3-phosphate (lysophosphatidic acid or LPA) into 1,2-diacyl-sn-glycerol-3-phosphate (phosphatidic acid or PA) by incorporating an acyl moiety at the sn-2 position of the glycerol backbone. Acts on LPA containing saturated or unsaturated fatty acids C16:0-C20:4 at the sn-1 position using C18:1, C20:4 or C18:2-CoA as the acyl donor. Also acts on lysophosphatidylcholine, lysophosphatidylinositol and lysophosphatidylserine using C18:1 or C20:4-CoA. Has a preference for arachidonoyl-CoA as a donor. Also has a modest lysophosphatidylinositol acyltransferase (LPIAT) activity, converts lysophosphatidylinositol (LPI) into phosphatidylinositol. The polypeptide is 1-acyl-sn-glycerol-3-phosphate acyltransferase gamma (Mus musculus (Mouse)).